We begin with the raw amino-acid sequence, 518 residues long: UDP-N-acetylmuramate--L-alanine ligase (518 aa).

158–164 contributes to the ATP binding site; it reads GTHGKTT.

Belongs to the MurCDEF family.

The protein localises to the cytoplasm. It catalyses the reaction UDP-N-acetyl-alpha-D-muramate + L-alanine + ATP = UDP-N-acetyl-alpha-D-muramoyl-L-alanine + ADP + phosphate + H(+). The protein operates within cell wall biogenesis; peptidoglycan biosynthesis. In terms of biological role, cell wall formation. This Crocosphaera subtropica (strain ATCC 51142 / BH68) (Cyanothece sp. (strain ATCC 51142)) protein is UDP-N-acetylmuramate--L-alanine ligase.